The primary structure comprises 176 residues: RNA pyrophosphohydrolase (176 aa).

The 144-residue stretch at 6 to 149 (GYRPNVGIVI…KRDVYRRVMK (144 aa)) folds into the Nudix hydrolase domain. The Nudix box signature appears at 38–59 (GGINPGESAEQAMYRELFEEVG).

This sequence belongs to the Nudix hydrolase family. RppH subfamily. Requires a divalent metal cation as cofactor.

Accelerates the degradation of transcripts by removing pyrophosphate from the 5'-end of triphosphorylated RNA, leading to a more labile monophosphorylated state that can stimulate subsequent ribonuclease cleavage. The sequence is that of RNA pyrophosphohydrolase from Shigella boydii serotype 18 (strain CDC 3083-94 / BS512).